The chain runs to 162 residues: Succinate dehydrogenase assembly factor 2, mitochondrial (162 aa).

A mitochondrion-targeting transit peptide spans 1 to 35 (MHNMFPALTKTLSLQGYKIINSQTGSAAWSCGRRW).

It belongs to the SDHAF2 family. Interacts with SDH1 within the SDH catalytic dimer.

The protein localises to the mitochondrion matrix. Its function is as follows. Plays an essential role in the assembly of succinate dehydrogenase (SDH), an enzyme complex (also referred to as respiratory complex II) that is a component of both the tricarboxylic acid (TCA) cycle and the mitochondrial electron transport chain, and which couples the oxidation of succinate to fumarate with the reduction of ubiquinone (coenzyme Q) to ubiquinol. Required for flavinylation (covalent attachment of FAD) of the flavoprotein subunit SDH1 of the SDH catalytic dimer. It is unclear whether it participates in the chemistry of FAD attachment (enzymatic function) or acts as a chaperone that maintains SDH1 in a conformation that is susceptible to autocatalytic FAD attachment. Does not bind FAD or FADH(2) in vitro. Involved in sporulation. Required for the full activation of the early meiotic inducer IME1. This Saccharomyces cerevisiae (strain ATCC 204508 / S288c) (Baker's yeast) protein is Succinate dehydrogenase assembly factor 2, mitochondrial.